Here is a 210-residue protein sequence, read N- to C-terminus: Isochorismatase domain-containing protein 2B (210 aa).

Lys178 carries the N6-succinyllysine modification.

Belongs to the isochorismatase family. Interacts with CDKN2A. In terms of tissue distribution, ubiquitous. Expressed predominantly in uterus, stomach and urinary tract.

It localises to the cytoplasm. The protein localises to the nucleus. This Mus musculus (Mouse) protein is Isochorismatase domain-containing protein 2B (Isoc2b).